Here is a 482-residue protein sequence, read N- to C-terminus: MAQTQGTKRKVCYYYDGDVGNYYYGQGHPMKPHRIRMTHNLLLNYGLYRKMEIYRPHKANAEEMTKYHSDDYIKFLRSIRPDNMSEYSKQMQRFNVGEDCPVFDGLFEFCQLSTGGSVASAVKLNKQQTDIAVNWAGGLHHAKKSEASGFCYVNDIVLAILELLKYHQRVLYIDIDIHHGDGVEEAFYTTDRVMTVSFHKYGEYFPGTGDLRDIGAGKGKYYAVNYPLRDGIDDESYEAIFKPVMSKVMEMFQPSAVVLQCGSDSLSGDRLGCFNLTIKGHAKCVEFVKSFNLPMLMLGGGGYTIRNVARCWTYETAVALDTEIPNELPYNDYFEYFGPDFKLHISPSNMTNQNTNEYLEKIKQRLFENLRMLPHAPGVQMQAIPEDAIPEESGDEDEEDPDKRISICSSDKRIACEEEFSDSDEEGEGGRKNSSNFKKAKRVKTEDEKEKDPEEKKEVTEEEKTKEEKPEAKGVKEEVKMA.

Residues 9–321 (RKVCYYYDGD…WTYETAVALD (313 aa)) form a histone deacetylase region. Positions 27 and 31 each coordinate 1D-myo-inositol 1,4,5,6-tetrakisphosphate. Lys74 is subject to N6-acetyllysine; alternate. A Glycyl lysine isopeptide (Lys-Gly) (interchain with G-Cter in SUMO2); alternate cross-link involves residue Lys74. The active site involves His141. Positions 176 and 178 each coordinate Zn(2+). At Lys220 the chain carries N6-acetyllysine. Cys261 bears the S-nitrosocysteine mark. Asp264 contributes to the Zn(2+) binding site. 1D-myo-inositol 1,4,5,6-tetrakisphosphate is bound at residue Arg270. At Cys273 the chain carries S-nitrosocysteine. A compositionally biased stretch (acidic residues) spans 390-400 (PEESGDEDEED). Residues 390–482 (PEESGDEDEE…KGVKEEVKMA (93 aa)) form a disordered region. 5 positions are modified to phosphoserine: Ser393, Ser406, Ser409, Ser421, and Ser423. Over residues 401–416 (PDKRISICSSDKRIAC) the composition is skewed to basic and acidic residues. Residues 417–427 (EEEFSDSDEEG) are compositionally biased toward acidic residues. Position 432 is an N6-methylated lysine; by EHMT2 (Lys432). Lys438 participates in a covalent cross-link: Glycyl lysine isopeptide (Lys-Gly) (interchain with G-Cter in SUMO2). Residues 443–482 (VKTEDEKEKDPEEKKEVTEEEKTKEEKPEAKGVKEEVKMA) show a composition bias toward basic and acidic residues. Lys444 is covalently cross-linked (Glycyl lysine isopeptide (Lys-Gly) (interchain with G-Cter in SUMO2); alternate). A Glycyl lysine isopeptide (Lys-Gly) (interchain with G-Cter in SUMO); alternate cross-link involves residue Lys444. Residues Lys456, Lys457, and Lys473 each participate in a glycyl lysine isopeptide (Lys-Gly) (interchain with G-Cter in SUMO2) cross-link. Lys476 is covalently cross-linked (Glycyl lysine isopeptide (Lys-Gly) (interchain with G-Cter in SUMO2); alternate). Lys476 participates in a covalent cross-link: Glycyl lysine isopeptide (Lys-Gly) (interchain with G-Cter in SUMO); alternate. Lys480 is covalently cross-linked (Glycyl lysine isopeptide (Lys-Gly) (interchain with G-Cter in SUMO2)).

Belongs to the histone deacetylase family. HD type 1 subfamily. As to quaternary structure, part of the core histone deacetylase (HDAC) complex composed of HDAC1, HDAC2, RBBP4 and RBBP7, the core complex associates with SIN3, SAP18 and SAP30 to form the SIN3 HDAC complex. Component of the nucleosome remodeling and deacetylase (NuRD) repressor complex, composed of core proteins MTA1, MTA2, MTA3, RBBP4, RBBP7, HDAC1, HDAC2, MBD2, MBD3, and peripherally associated proteins CDK2AP1, CDK2AP2, GATAD2A, GATAD2B, CHD3, CHD4 and CHD5. The exact stoichiometry of the NuRD complex is unknown, and some subunits such as MBD2 and MBD3, GATAD2A and GATAD2B, and CHD3, CHD4 and CHD5 define mutually exclusive NuRD complexes. Component of a BHC histone deacetylase complex that contains HDAC1, HDAC2, HMG20B/BRAF35, KDM1A, RCOR1/CoREST and PHF21A/BHC80. The BHC complex may also contain ZMYM2, ZNF217, ZMYM3, GSE1 and GTF2I. Component of a mSin3A corepressor complex that contains SIN3A, SAP130, SUDS3/SAP45, ARID4B/SAP180, HDAC1 and HDAC2. Found in a trimeric complex with APBB1 and TSHZ3; the interaction between HDAC1 and APBB1 is mediated by TSHZ3. Forms a complex comprising APPL1, RUVBL2, APPL2, CTNNB1 and HDAC2. Component of a RCOR/GFI/KDM1A/HDAC complex. Part of a complex composed of TRIM28, HDAC1, HDAC2 and EHMT2. Part of a complex containing at least CDYL, MIER1, MIER2, HDAC1 and HDAC2. The large PER complex involved in the histone deacetylation is composed of at least HDAC1, PER2, SFPQ and SIN3A. Associates with the 9-1-1 complex; interacts with HUS1. Found in a complex with DNMT3A and HDAC7. Found in a complex with YY1, SIN3A and GON4L. Identified in a histone deacetylase complex that contains DNTTIP1, HDAC1 and MIDEAS; this complex assembles into a tetramer that contains four copies of each protein chain. Found in a complex composed of at least SINHCAF, SIN3A, HDAC1, SAP30, RBBP4, OGT and TET1. Component of the SIN3B complex, which includes SIN3B, HDAC1, PHF12 and MORF4L1. Interacts with GFI1; the interaction is direct. Interacts directly with GFI1B. Interacts with TSHZ3 (via N-terminus); the interaction is direct. Interacts with APEX1; the interaction is not dependent on the acetylated status of APEX1. Interacts with BANP. Interacts with BAZ2A/TIP5. Interacts with BCL6. Interacts with BCOR. Interacts with BHLHE40/DEC1. Interacts with BRCC3; this interaction is enhanced in the presence of PWWP2B. Interacts with BRMS1. Interacts with BRMS1L. Interacts with C10orf90/FATS (via its N-terminal); the interaction prevents binding of HDAC1 to CDKN1A/p21 and facilitates the acetylation and stabilization of CDKN1A/p21. Interacts with CBFA2T3. Interacts with CCAR2. Interacts with CDK2AP1. Interacts with CHD3. Interacts with CHD4. Interacts with CHFR. Interacts with CIART. Interacts with CDKN1A/p21. Interacts with CDK5 complexed to CDK5R1 (p25). Interacts with CRY1. Interacts with DAXX. Interacts with DDIT3/CHOP. Interacts with DDX5. Interacts with DHX36; this interaction occurs in a RNA-dependent manner. Interacts with DNMT1. Interacts with DNTTIP1. Interacts with E4F1. Interacts with EP300. Interacts with ERCC6. Interacts with GATAD2A. Interacts with HCFC1. Interacts with HDAC9. Interacts with HUS1. Interacts with INSM1. Interacts with KDM4A. Interacts with KDM5A; this interaction impairs histone deacetylation. Interacts with KDM5B. Interacts with KLF1. Interacts with MBD3L2. Interacts with MIER1. Interacts with NFE4. Interacts with NR4A2/NURR1. Interacts with NR1D2 (via C-terminus). Interacts with NRIP1. Interacts with NSD2. Interacts with PACS2. Interacts with PHB2. Interacts with PPHLN1. Interacts with PRDM6. Interacts with PRDM16. Interacts with PWWP2A in a MTA1-dependent manner. Interacts with PWWP2B. Interacts with RB1. Interacts with RERE. Interacts with SANBR (via the BTB domain). Interacts with SAMSN1. Interacts with SAP30L. Interacts with SETDB1. Interacts with SIN3A. Interacts with SMAD3. Interacts with SMAD4; positively regulated by ZBTB7A. Interacts with SMARCAD1. Interacts with SMARCA4/BRG1. Interacts with SMYD2. Interacts with SMYD4 (via MYND-type zinc finger). Interacts with SP1; the interaction deacetylates SP1 and regulates its transcriptional activity. Interacts with SP3; the interaction deacetylates SP3 and regulates its transcriptional activity. In vitro, C(18) ceramides increase this interaction and the subsequent SP3 deacetylation and SP3-mediated repression of the TERT promoter. Interacts with SPEN/MINT. Interacts with SPHK2. Interacts with SUV39H1. Interacts with TGIF. Interacts with TGIF2. Interacts with TRAF6. Interacts with TRIM28; the interaction recruits HDAC1 to E2F1 and inhibits its acetylation. Interacts with TSC22D3 isoform 1; this interaction affects HDAC1 activity on MYOG promoter and thus inhibits MYOD1 transcriptional activity. Interacts with UHRF1. Interacts with UHRF2. Interacts with ZBTB7A. Interacts with ZMYND8. Interacts with ZMYND15. Interacts with ZNF431. Interacts with ZNF516; this interaction is enhanced in the presence of PWWP2B. Interacts with ZNF541. Interacts with ZNF638. Interacts with ZNHIT1. Interacts with the non-histone region of MACROH2A1. Identified in a complex with HDAC2, KCTD19, DNTTIP1 and ZNF541. Interacts with MSX3. Interacts with VRK1. It depends on Zn(2+) as a cofactor. Post-translationally, sumoylated on Lys-444 and Lys-476; which promotes enzymatic activity. Desumoylated by SENP1. Phosphorylation on Ser-421 and Ser-423 promotes enzymatic activity and interactions with NuRD and SIN3 complexes. Phosphorylated by CDK5. In terms of processing, ubiquitinated by CHFR and KCTD11, leading to its degradation by the proteasome.

The protein localises to the nucleus. The catalysed reaction is N(6)-acetyl-L-lysyl-[histone] + H2O = L-lysyl-[histone] + acetate. It catalyses the reaction N(6)-acetyl-L-lysyl-[protein] + H2O = L-lysyl-[protein] + acetate. It carries out the reaction N(6)-(2E)-butenoyl-L-lysyl-[protein] + H2O = (2E)-2-butenoate + L-lysyl-[protein]. The enzyme catalyses N(6)-[(S)-lactoyl]-L-lysyl-[protein] + H2O = (S)-lactate + L-lysyl-[protein]. With respect to regulation, inositol tetraphosphate (1D-myo-inositol 1,4,5,6-tetrakisphosphate) may act as an intermolecular glue between HDAC1 and N-Cor repressor complex components. Functionally, histone deacetylase that catalyzes the deacetylation of lysine residues on the N-terminal part of the core histones (H2A, H2B, H3 and H4). Histone deacetylation gives a tag for epigenetic repression and plays an important role in transcriptional regulation, cell cycle progression and developmental events. Histone deacetylases act via the formation of large multiprotein complexes. Acts as a component of the histone deacetylase NuRD complex which participates in the remodeling of chromatin. As part of the SIN3B complex is recruited downstream of the constitutively active genes transcriptional start sites through interaction with histones and mitigates histone acetylation and RNA polymerase II progression within transcribed regions contributing to the regulation of transcription. Also functions as a deacetylase for non-histone targets, such as NR1D2, RELA, SP1, SP3, STAT3 and TSHZ3. Deacetylates SP proteins, SP1 and SP3, and regulates their function. Component of the BRG1-RB1-HDAC1 complex, which negatively regulates the CREST-mediated transcription in resting neurons. Upon calcium stimulation, HDAC1 is released from the complex and CREBBP is recruited, which facilitates transcriptional activation. Deacetylates TSHZ3 and regulates its transcriptional repressor activity. Deacetylates 'Lys-310' in RELA and thereby inhibits the transcriptional activity of NF-kappa-B. Deacetylates NR1D2 and abrogates the effect of KAT5-mediated relieving of NR1D2 transcription repression activity. Component of a RCOR/GFI/KDM1A/HDAC complex that suppresses, via histone deacetylase (HDAC) recruitment, a number of genes implicated in multilineage blood cell development. Involved in CIART-mediated transcriptional repression of the circadian transcriptional activator: CLOCK-BMAL1 heterodimer. Required for the transcriptional repression of circadian target genes, such as PER1, mediated by the large PER complex or CRY1 through histone deacetylation. In addition to protein deacetylase activity, also has protein-lysine deacylase activity: acts as a protein decrotonylase and delactylase by mediating decrotonylation ((2E)-butenoyl) and delactylation (lactoyl) of histones, respectively. The polypeptide is Histone deacetylase 1 (Hdac1) (Rattus norvegicus (Rat)).